A 334-amino-acid chain; its full sequence is Replication-associated protein (334 aa).

Residues R9–F111 form the CRESS-DNA virus Rep endonuclease domain. Residues F16–Y19 carry the RCR-1 motif. A divalent metal cation contacts are provided by E50, H58, and H60. Positions H58 to H60 match the RCR-2 motif. The For DNA cleavage activity role is filled by Y98. An RCR-3 motif is present at residues Y98–K101. A divalent metal cation is bound at residue D102. Residues S160–Y172 form an oligomerization region. G213–T220 lines the ATP pocket. The segment at I236–P254 is transactivation. The Nuclear localization signal signature appears at K276–G286.

It belongs to the geminiviridae Rep protein family. As to quaternary structure, homooligomer. Rep binds to repeated DNA motifs (iterons). Forms the O-complex, which is a Rep-DNA complex involved in the initiation of RCR. Part of the C- and V-complexes which are RepA-Rep-DNA complexes involved in the c-sense and v-sense transcription. The cofactor is Mg(2+). Requires Mn(2+) as cofactor.

It localises to the host nucleus. Its function is as follows. Essential for the replication of viral ssDNA. The closed circular ssDNA genome is first converted to a superhelical dsDNA. Rep binds a specific region at the genome origin of replication. It introduces an endonucleolytic nick within the conserved sequence 5'-TAATATTAC-3' in the intergenic region of the genome present in all geminiviruses, thereby initiating the rolling circle replication (RCR). Following cleavage, binds covalently to the 5'-phosphate of DNA as a tyrosyl ester. The cleavage gives rise to a free 3'-OH that serves as a primer for the cellular DNA polymerase. The polymerase synthesizes the (+) strand DNA by rolling circle mechanism. After one round of replication, a Rep-catalyzed nucleotidyl transfer reaction releases a circular single-stranded virus genome, thereby terminating the replication. Displays origin-specific DNA cleavage, nucleotidyl transferase, ATPase and helicase activities. Acts a an inhibitor of C-sense gene transcription. The polypeptide is Replication-associated protein (Phaseolus vulgaris (Kidney bean)).